The following is a 108-amino-acid chain: Heme oxygenase (staphylobilin-producing) (108 aa).

An ABM domain is found at 2–93; it reads FMAENRLQLQ…DDDGQQSPIL (92 aa). N6 contributes to the Fe cation binding site. Heme-binding positions include 21-28 and H76; that span reads RFYNRQGI.

Belongs to the antibiotic biosynthesis monooxygenase family. Heme-degrading monooxygenase IsdG subfamily. Homodimer.

It localises to the cytoplasm. It carries out the reaction heme b + 5 AH2 + 4 O2 + 2 H(+) = delta-staphylobilin + Fe(2+) + formaldehyde + 5 A + 4 H2O. The catalysed reaction is heme b + 5 AH2 + 4 O2 + 2 H(+) = beta-staphylobilin + Fe(2+) + formaldehyde + 5 A + 4 H2O. Functionally, allows bacterial pathogens to use the host heme as an iron source. Catalyzes the oxidative degradation of the heme macrocyclic porphyrin ring to the oxo-bilirubin chromophore staphylobilin (a mixture of the linear tetrapyrroles 5-oxo-delta-bilirubin and 15-oxo-beta-bilirubin) in the presence of a suitable electron donor such as ascorbate or NADPH--cytochrome P450 reductase, with subsequent release of free iron. In Staphylococcus aureus (strain Mu3 / ATCC 700698), this protein is Heme oxygenase (staphylobilin-producing) (isdI).